Consider the following 312-residue polypeptide: Malate dehydrogenase (312 aa).

NAD(+) contacts are provided by residues G12–G17 and D36. Positions 87 and 93 each coordinate substrate. NAD(+) contacts are provided by residues N100 and L123–N125. N125 is a substrate binding site. S149 bears the Phosphoserine mark. R156 contributes to the substrate binding site. H180 serves as the catalytic Proton acceptor.

This sequence belongs to the LDH/MDH superfamily. MDH type 3 family.

It catalyses the reaction (S)-malate + NAD(+) = oxaloacetate + NADH + H(+). In terms of biological role, catalyzes the reversible oxidation of malate to oxaloacetate. The chain is Malate dehydrogenase from Geobacillus sp. (strain WCH70).